We begin with the raw amino-acid sequence, 188 residues long: Elongation factor P (188 aa).

The protein belongs to the elongation factor P family.

It is found in the cytoplasm. It participates in protein biosynthesis; polypeptide chain elongation. Its function is as follows. Involved in peptide bond synthesis. Stimulates efficient translation and peptide-bond synthesis on native or reconstituted 70S ribosomes in vitro. Probably functions indirectly by altering the affinity of the ribosome for aminoacyl-tRNA, thus increasing their reactivity as acceptors for peptidyl transferase. This Aeromonas hydrophila subsp. hydrophila (strain ATCC 7966 / DSM 30187 / BCRC 13018 / CCUG 14551 / JCM 1027 / KCTC 2358 / NCIMB 9240 / NCTC 8049) protein is Elongation factor P.